Reading from the N-terminus, the 298-residue chain is uncharacterized protein (298 aa).

Positions 1-17 are enriched in basic and acidic residues; sequence MLTKSAENKRNRKDDSM. Positions 1–22 are disordered; sequence MLTKSAENKRNRKDDSMRPGQQ. Residues 167-227 enclose the S1 motif domain; it reads NKELTGTVYR…EDGSVNLSLL (61 aa).

This is an uncharacterized protein from Bacillus subtilis (strain 168).